A 696-amino-acid chain; its full sequence is Translation factor waclaw, mitochondrial (696 aa).

The N-terminal 76 residues, 1–76 (MIVGYSVFFH…RNLSTTNQVK (76 aa)), are a transit peptide targeting the mitochondrion. One can recognise a tr-type G domain in the interval 97–278 (ERIRNFSIIA…RVIETVPPPQ (182 aa)). Residues 106–113 (AHVDHGKS), 171–175 (DTPGH), and 225–228 (NKID) each bind GTP.

It belongs to the TRAFAC class translation factor GTPase superfamily. Classic translation factor GTPase family. LepA subfamily.

It is found in the mitochondrion inner membrane. The enzyme catalyses GTP + H2O = GDP + phosphate + H(+). Promotes mitochondrial protein synthesis. May act as a fidelity factor of the translation reaction, by catalyzing a one-codon backward translocation of tRNAs on improperly translocated ribosomes. Binds to mitochondrial ribosomes in a GTP-dependent manner. The sequence is that of Translation factor waclaw, mitochondrial from Drosophila melanogaster (Fruit fly).